The chain runs to 101 residues: Small ribosomal subunit protein eS24 (101 aa).

Belongs to the eukaryotic ribosomal protein eS24 family.

This is Small ribosomal subunit protein eS24 from Methanocaldococcus jannaschii (strain ATCC 43067 / DSM 2661 / JAL-1 / JCM 10045 / NBRC 100440) (Methanococcus jannaschii).